The primary structure comprises 711 residues: C-Jun-amino-terminal kinase-interacting protein 1 (711 aa).

The disordered stretch occupies residues 1 to 27 (MAERESGGLGGGAASPPAASPFLGLHI). A compositionally biased stretch (low complexity) spans 14 to 25 (ASPPAASPFLGL). Phosphoserine occurs at positions 15, 29, and 40. Positions 78 to 371 (AGGGGAGSRL…PPRASLSSDT (294 aa)) are disordered. Thr103 is subject to Phosphothreonine; by MAPK8, MAPK9 and MAPK10. A compositionally biased stretch (acidic residues) spans 105–116 (GAEDDEEDDDEE). The tract at residues 127–285 (PKAESGQEPA…EATEEIYLTP (159 aa)) is JNK-binding domain (JBD). A compositionally biased stretch (low complexity) spans 139 to 149 (GQGQSQGQSQG). A Phosphoserine modification is found at Ser152. The interval 157-176 (RPKRPTTLNLFPQVPRSQDT) is minimal inhibitory domain (MID). Over residues 162–182 (TTLNLFPQVPRSQDTLNNNSL) the composition is skewed to polar residues. Phosphoserine is present on residues Ser181, Ser187, Ser193, Ser195, and Ser196. Polar residues predominate over residues 194-204 (RSSSPLKTGEQ). Thr205 is subject to Phosphothreonine; by MAPK8, MAPK9 and MAPK10. A Phosphoserine modification is found at Ser214. Polar residues predominate over residues 228-244 (DRGTSTDSPCRRSTATQ). Basic and acidic residues predominate over residues 267–277 (IHYQADVRLEA). Positions 283–471 (LTPVQRPPDA…NVFMSGRSRS (189 aa)) are interaction with MAP3K7. Phosphoserine occurs at positions 311, 328, 330, 340, 355, 366, 369, 407, and 409. 2 short sequence motifs (D-box) span residues 353-360 (RGSLGEPP) and 364-372 (RASLSSDTS). Thr411 carries the post-translational modification Phosphothreonine. The disordered stretch occupies residues 429-451 (EEYEEAPRPQPPACLSEDSTPDE). A phosphoserine mark is found at Ser444 and Ser447. Phosphothreonine is present on Thr448. Phosphoserine is present on residues Ser469, Ser471, Ser472, and Ser473. Residues 471–660 (SSSAESFGLF…PKNNKYFGFI (190 aa)) form an interaction with VRK2 region. An SH3 domain is found at 488 to 549 (EQEQTHRAIF…PAYYAIEVTK (62 aa)). The PID domain occupies 561 to 700 (SDWVDQFRVK…FQQFYKQFVE (140 aa)).

The protein belongs to the JIP scaffold family. Forms homo- or heterooligomeric complexes. Binds specific components of the JNK signaling pathway namely, MAPK8/JNK1, MAPK9/JNK2, MAPK10/JNK3, MAP2K7/MKK7, MAP3K11/MLK3 and DLK1. Also binds the proline-rich domain-containing splice variant of apolipoprotein E receptor 2 (ApoER2). Interacts, via the PID domain, with ARHGEF28. Binds the cytoplasmic tails of LRP1 and LRP2 (Megalin). Binds the TPR motif-containing C-terminal of KNS2, then the pre-assembled MAPK8IP1 scaffolding complexes are transported as a cargo of kinesin, to the required subcellular location. Interacts with the cytoplasmic domain of APP. Interacts with DCLK2. Interacts with MAP3K7/TAK1. Interacts with isoform 1 and isoform 2 of VRK2. Found in a complex with SH3RF1, RAC1, MAP3K11/MLK3, MAP2K7/MKK7 and MAPK8/JNK1. Found in a complex with SH3RF1, RAC2, MAP3K7/TAK1, MAP2K7/MKK7, MAPK8/JNK1 and MAPK9/JNK2. Interacts with SH3RF2. Post-translationally, phosphorylated by MAPK8, MAPK9 and MAPK10. Phosphorylation on Thr-103 is also necessary for the dissociation and activation of MAP3K12. Phosphorylated by isoform 1 and isoform 2 of VRK2. Hyperphosphorylated during mitosis following activation of stress-activated and MAP kinases. Ubiquitinated. Two preliminary events are required to prime for ubiquitination; phosphorylation and an increased in intracellular calcium concentration. Then, the calcium influx initiates ubiquitination and degradation by the ubiquitin-proteasome pathway. Highly expressed in brain. Expressed in neurons, localizing to neurite tips in differentiating cells. Also expressed in the pancreas, testis and prostate. Low levels in heart, ovary and small intestine. Decreased levels in pancreatic beta cells sensitize cells to IL-1-beta-induced apoptosis.

Its subcellular location is the cytoplasm. It is found in the perinuclear region. It localises to the nucleus. The protein resides in the endoplasmic reticulum membrane. The protein localises to the mitochondrion membrane. The JNK-interacting protein (JIP) group of scaffold proteins selectively mediates JNK signaling by aggregating specific components of the MAPK cascade to form a functional JNK signaling module. Required for JNK activation in response to excitotoxic stress. Cytoplasmic MAPK8IP1 causes inhibition of JNK-regulated activity by retaining JNK in the cytoplasm and inhibiting JNK phosphorylation of c-Jun. May also participate in ApoER2-specific reelin signaling. Directly, or indirectly, regulates GLUT2 gene expression and beta-cell function. Appears to have a role in cell signaling in mature and developing nerve terminals. May function as a regulator of vesicle transport, through interactions with the JNK-signaling components and motor proteins. Functions as an anti-apoptotic protein and whose level seems to influence the beta-cell death or survival response. Acts as a scaffold protein that coordinates with SH3RF1 in organizing different components of the JNK pathway, including RAC1 or RAC2, MAP3K11/MLK3 or MAP3K7/TAK1, MAP2K7/MKK7, MAPK8/JNK1 and/or MAPK9/JNK2 into a functional multiprotein complex to ensure the effective activation of the JNK signaling pathway. Regulates the activation of MAPK8/JNK1 and differentiation of CD8(+) T-cells. This Homo sapiens (Human) protein is C-Jun-amino-terminal kinase-interacting protein 1 (MAPK8IP1).